A 290-amino-acid chain; its full sequence is Ribosomal RNA small subunit methyltransferase A (290 aa).

S-adenosyl-L-methionine-binding residues include Asn-27, Leu-29, Gly-54, Glu-75, Asp-100, and Asn-125.

It belongs to the class I-like SAM-binding methyltransferase superfamily. rRNA adenine N(6)-methyltransferase family. RsmA subfamily.

Its subcellular location is the cytoplasm. It carries out the reaction adenosine(1518)/adenosine(1519) in 16S rRNA + 4 S-adenosyl-L-methionine = N(6)-dimethyladenosine(1518)/N(6)-dimethyladenosine(1519) in 16S rRNA + 4 S-adenosyl-L-homocysteine + 4 H(+). Its function is as follows. Specifically dimethylates two adjacent adenosines (A1518 and A1519) in the loop of a conserved hairpin near the 3'-end of 16S rRNA in the 30S particle. May play a critical role in biogenesis of 30S subunits. This is Ribosomal RNA small subunit methyltransferase A from Streptococcus agalactiae serotype V (strain ATCC BAA-611 / 2603 V/R).